A 101-amino-acid polypeptide reads, in one-letter code: Guanyl-specific ribonuclease Po1 (101 aa).

Gln-1 is modified (pyrrolidone carboxylic acid). Disulfide bonds link Cys-7–Cys-84, Cys-9–Cys-99, and Cys-48–Cys-82. His-36 is a catalytic residue. Catalysis depends on Glu-54, which acts as the Proton acceptor. His-87 acts as the Proton donor in catalysis.

The protein belongs to the ribonuclease N1/T1 family.

The enzyme catalyses [RNA] containing guanosine + H2O = an [RNA fragment]-3'-guanosine-3'-phosphate + a 5'-hydroxy-ribonucleotide-3'-[RNA fragment].. With respect to regulation, inhibited by divalent cations. Inhibition decreases in the order zinc, lead, cadmium, nickel, mercury. This chain is Guanyl-specific ribonuclease Po1, found in Pleurotus ostreatus (Oyster mushroom).